The sequence spans 702 residues: Serotransferrin-A (702 aa).

An N-terminal signal peptide occupies residues 1–19 (MDLSLRVALCLSMLALCLA). Transferrin-like domains follow at residues 26 to 340 (VRWC…ALKE) and 353 to 685 (VRWC…SLNK). Cystine bridges form between C29–C64 and C39–C55. Fe(3+) contacts are provided by D79 and Y111. Disulfide bonds link C134–C217, C179–C192, and C245–C259. The hydrogencarbonate site is built by T136, K140, A142, and G143. Y211 contacts Fe(3+). Residue H267 participates in Fe(3+) binding. The tract at residues 340–349 (EGVKEDDSAA) is connecting region. Intrachain disulfides connect C356-C388 and C366-C379. The Fe(3+) site is built by D403 and Y442. Intrachain disulfides connect C413-C697, C431-C658, C465-C544, C489-C686, C499-C513, C510-C527, and C584-C598. T467, R471, A473, and G474 together coordinate hydrogencarbonate. Y538 contributes to the Fe(3+) binding site. H606 is a binding site for Fe(3+).

The protein belongs to the transferrin family. In terms of assembly, monomer. As to expression, plasma.

The protein localises to the secreted. In terms of biological role, transferrins are iron binding transport proteins which can bind two Fe(3+) ions in association with the binding of an anion, usually bicarbonate. It is responsible for the transport of iron from sites of absorption and heme degradation to those of storage and utilization. Serum transferrin may also have a further role in stimulating cell proliferation. In Xenopus laevis (African clawed frog), this protein is Serotransferrin-A (tf-a).